A 282-amino-acid chain; its full sequence is Energy-coupling factor transporter ATP-binding protein EcfA1 (282 aa).

One can recognise an ABC transporter domain in the interval 6-243 (VTVKHLSFTY…EVLIKSAGLE (238 aa)). Residue 40–47 (GHNGSGKS) participates in ATP binding.

The protein belongs to the ABC transporter superfamily. Energy-coupling factor EcfA family. As to quaternary structure, forms a stable energy-coupling factor (ECF) transporter complex composed of 2 membrane-embedded substrate-binding proteins (S component), 2 ATP-binding proteins (A component) and 2 transmembrane proteins (T component).

The protein resides in the cell membrane. In terms of biological role, ATP-binding (A) component of a common energy-coupling factor (ECF) ABC-transporter complex. Unlike classic ABC transporters this ECF transporter provides the energy necessary to transport a number of different substrates. The polypeptide is Energy-coupling factor transporter ATP-binding protein EcfA1 (Lactobacillus johnsonii (strain CNCM I-12250 / La1 / NCC 533)).